A 141-amino-acid polypeptide reads, in one-letter code: Arsenate reductase (141 aa).

Catalysis depends on C12, which acts as the Nucleophile; cysteine thioarsenate intermediate.

It belongs to the ArsC family. Monomer in solution.

It catalyses the reaction [glutaredoxin]-dithiol + arsenate + glutathione + H(+) = glutathionyl-S-S-[glutaredoxin] + arsenite + H2O. With respect to regulation, inhibited by the thiol reagents iodoacetate (IAA) and N-ethylmaleimide (NEM). Activity is rapidly inactivated by the histidine-modifying reagent diethylpyrocarbonate (DEPC). Involved in resistance to arsenate. Catalyzes the reduction of arsenate [As(V)] to arsenite [As(III)]. The resulting arsenite is then extruded from the cell via the ArsAB transport system. This is Arsenate reductase from Escherichia coli.